The following is a 1451-amino-acid chain: ABC transporter G family member 32 (1451 aa).

The ABC transporter 1 domain maps to 162–435; the sequence is GNALHISPTR…FELMGFRCPQ (274 aa). An ATP-binding site is contributed by 195-202; that stretch reads GPPGSGKT. Residues 513–725 enclose the ABC transmembrane type-2 1 domain; the sequence is ALLKANIDRE…AQNAISTNEF (213 aa). Transmembrane regions (helical) follow at residues 531–551, 563–583, 618–638, 650–670, 674–694, and 760–780; these read FVYIFKAANLTLTAFLVMTTF, GTIYMGALYFALDTIMFNGFA, IPVTFFEVGVYVFTTYYVVGF, LLLVALNQMSSSLFRFIAGIG, VVSQTFGPLSLLAFTALGGFI, and IGFGALIGYTLLFNLLYTVAL. The segment at 809-835 is disordered; the sequence is ILDSCEEKKSRKKEQSQSVNQKHWNNT. Residues 813–823 show a composition bias toward basic and acidic residues; sequence CEEKKSRKKEQ. Residues 853 to 1105 form the ABC transporter 2 domain; the sequence is LSFNDIKYSV…KLIEYFEGIE (253 aa). 898–905 is a binding site for ATP; that stretch reads GVSGAGKT. The ABC transmembrane type-2 2 domain occupies 1178–1392; sequence TQCIACLWKH…TLYGLVASQF (215 aa). Transmembrane regions (helical) follow at residues 1197 to 1217, 1237 to 1257, 1285 to 1305, 1312 to 1332, 1342 to 1362, 1373 to 1393, and 1423 to 1443; these read YTAVRLLFTIIIALLFGTMFW, YAAVLYIGIQNSGCVQPVVVV, LPYILVQTLVYGVLVYSMIGF, FIWYLFFMYFTLLYFTFFGMM, IAAIISPAIYNAWNLFSGYLI, WYCWICPVAWTLYGLVASQFG, and LVAVVHVVFTVMFAFLFSFAI.

It belongs to the ABC transporter superfamily. ABCG family. PDR (TC 3.A.1.205) subfamily.

It is found in the membrane. May be a general defense protein. This chain is ABC transporter G family member 32, found in Oryza sativa subsp. japonica (Rice).